The primary structure comprises 648 residues: ATP-dependent zinc metalloprotease FtsH 4 (648 aa).

The Cytoplasmic segment spans residues 1-6 (MKQSHK). A helical transmembrane segment spans residues 7–27 (TLLLWVLLIMMFLAIWQFLSP). Residues 28–111 (DSRPATQVAF…VFFEKEDTSP (84 aa)) lie on the Periplasmic side of the membrane. Residues 112 to 132 (FWPGAIMYLLPTVFLLVMFYL) traverse the membrane as a helical segment. Topologically, residues 133–648 (FMRQLQAGGG…FGTPKPAPST (516 aa)) are cytoplasmic. 205–212 (GPPGTGKT) provides a ligand contact to ATP. His-427 is a binding site for Zn(2+). Residue Glu-428 is part of the active site. Residues His-431 and Asp-504 each contribute to the Zn(2+) site. Residues 622 to 648 (YSDRDRAAKEKRRAASIFGTPKPAPST) form a disordered region.

In the central section; belongs to the AAA ATPase family. It in the C-terminal section; belongs to the peptidase M41 family. In terms of assembly, homohexamer. Zn(2+) serves as cofactor.

The protein localises to the cell inner membrane. Its function is as follows. Acts as a processive, ATP-dependent zinc metallopeptidase for both cytoplasmic and membrane proteins. Plays a role in the quality control of integral membrane proteins. This chain is ATP-dependent zinc metalloprotease FtsH 4, found in Sorangium cellulosum (strain So ce56) (Polyangium cellulosum (strain So ce56)).